Consider the following 209-residue polypeptide: MIGLVGKKVGMTRIFTEEGVSIPVTVIEVEANRVTQVKDLANDGYRAVQVTTGAKKANRVTKPEAGHFAKAGVEAGRGLWEFRLADGEEYTVGQSISVELFAEVKKVDVTGTSKGKGFAGTVKRWNFRTQDATHGNSLSHRVPGSIGQNQTPGKVFKGKKMAGQLGNERVTVQSLDVVRVDAERNLLLVKGAVPGATGSDLIVKPAVKA.

The residue at position 150 (glutamine 150) is an N5-methylglutamine.

The protein belongs to the universal ribosomal protein uL3 family. Part of the 50S ribosomal subunit. Forms a cluster with proteins L14 and L19. Methylated by PrmB.

Functionally, one of the primary rRNA binding proteins, it binds directly near the 3'-end of the 23S rRNA, where it nucleates assembly of the 50S subunit. The polypeptide is Large ribosomal subunit protein uL3 (Cronobacter sakazakii (strain ATCC BAA-894) (Enterobacter sakazakii)).